The following is a 1025-amino-acid chain: Multidrug resistance protein MdtC (1025 aa).

Transmembrane regions (helical) follow at residues 3-23 (FFALFIYRPVATILLSVAITL), 333-353 (EVEQTLIISVALVILVVFLFL), 360-380 (IIPAVAVPVSLIGTFAAMYLC), 387-407 (LSLMALTIATGFVVDDAIVVL), 431-451 (VGFTVLSMSLSLVAVFLPLLL), 463-483 (FAVTLSVAIGISLLVSLTLTP), 528-548 (LVGVVLLGTIALNIWLYISIP), 853-873 (VILIIAAIATVYIVLGILYES), 875-895 (VHPLTILSTLPSAGVGALLAL), 897-917 (LFNAPFSLIALIGIMLLIGIV), 953-973 (PIMMTTLAALFGALPLVLSGG), and 984-1004 (ITIVGGLVMSQLLTLYTTPVV).

Belongs to the resistance-nodulation-cell division (RND) (TC 2.A.6) family. MdtC subfamily. In terms of assembly, part of a tripartite efflux system composed of MdtA, MdtB and MdtC. MdtC forms a heteromultimer with MdtB.

Its subcellular location is the cell inner membrane. The MdtABC tripartite complex confers resistance against novobiocin and deoxycholate. The sequence is that of Multidrug resistance protein MdtC from Escherichia coli O127:H6 (strain E2348/69 / EPEC).